Here is a 524-residue protein sequence, read N- to C-terminus: Cytochrome P450 52A6 (524 aa).

A helical transmembrane segment spans residues W17–I34. Residue C472 coordinates heme.

The protein belongs to the cytochrome P450 family. Heme serves as cofactor.

The protein localises to the membrane. In terms of biological role, together with an NADPH cytochrome P450 the enzyme system catalyzes the terminal hydroxylation as the first step in the assimilation of alkanes and fatty acids. Preferentially hydroxylates hexadecane. The polypeptide is Cytochrome P450 52A6 (CYP52A6) (Candida tropicalis (Yeast)).